A 35-amino-acid chain; its full sequence is Photosystem II reaction center protein M (35 aa).

The helical transmembrane segment at 7–27 (GFIASILFVLVPTVFLLILFI) threads the bilayer.

The protein belongs to the PsbM family. PSII is composed of 1 copy each of membrane proteins PsbA, PsbB, PsbC, PsbD, PsbE, PsbF, PsbH, PsbI, PsbJ, PsbK, PsbL, PsbM, PsbT, PsbX, PsbY, PsbZ, Psb30/Ycf12, peripheral proteins PsbO, CyanoQ (PsbQ), PsbU, PsbV and a large number of cofactors. It forms dimeric complexes.

It localises to the cellular thylakoid membrane. One of the components of the core complex of photosystem II (PSII). PSII is a light-driven water:plastoquinone oxidoreductase that uses light energy to abstract electrons from H(2)O, generating O(2) and a proton gradient subsequently used for ATP formation. It consists of a core antenna complex that captures photons, and an electron transfer chain that converts photonic excitation into a charge separation. This subunit is found at the monomer-monomer interface. The chain is Photosystem II reaction center protein M from Microcystis aeruginosa (strain NIES-843 / IAM M-2473).